The sequence spans 901 residues: HTH-type transcriptional regulator MalT (901 aa).

39–46 is a binding site for ATP; the sequence is SPAGYGKT. The HTH luxR-type domain occupies 829–894; sequence ELIRTSPLTQ…DAVQHAQQLL (66 aa). The segment at residues 853–872 is a DNA-binding region (H-T-H motif); it reads NEQIAGELAVAATTIKTHIR.

Belongs to the MalT family. As to quaternary structure, monomer in solution. Oligomerizes to an active state in the presence of the positive effectors ATP and maltotriose.

Activated by ATP and maltotriose, which are both required for DNA binding. Positively regulates the transcription of the maltose regulon whose gene products are responsible for uptake and catabolism of malto-oligosaccharides. Specifically binds to the promoter region of its target genes, recognizing a short DNA motif called the MalT box. This is HTH-type transcriptional regulator MalT from Salmonella heidelberg (strain SL476).